The chain runs to 243 residues: Pyridoxine 5'-phosphate synthase (243 aa).

Asparagine 9 lines the 3-amino-2-oxopropyl phosphate pocket. Residue 11-12 (DH) participates in 1-deoxy-D-xylulose 5-phosphate binding. 3-amino-2-oxopropyl phosphate is bound at residue arginine 20. Histidine 45 acts as the Proton acceptor in catalysis. The 1-deoxy-D-xylulose 5-phosphate site is built by arginine 47 and histidine 52. The Proton acceptor role is filled by glutamate 72. Threonine 102 is a 1-deoxy-D-xylulose 5-phosphate binding site. The Proton donor role is filled by histidine 193. Residues glycine 194 and 215–216 (GH) each bind 3-amino-2-oxopropyl phosphate.

This sequence belongs to the PNP synthase family. As to quaternary structure, homooctamer; tetramer of dimers.

It is found in the cytoplasm. It catalyses the reaction 3-amino-2-oxopropyl phosphate + 1-deoxy-D-xylulose 5-phosphate = pyridoxine 5'-phosphate + phosphate + 2 H2O + H(+). Its pathway is cofactor biosynthesis; pyridoxine 5'-phosphate biosynthesis; pyridoxine 5'-phosphate from D-erythrose 4-phosphate: step 5/5. Its function is as follows. Catalyzes the complicated ring closure reaction between the two acyclic compounds 1-deoxy-D-xylulose-5-phosphate (DXP) and 3-amino-2-oxopropyl phosphate (1-amino-acetone-3-phosphate or AAP) to form pyridoxine 5'-phosphate (PNP) and inorganic phosphate. This chain is Pyridoxine 5'-phosphate synthase, found in Vibrio vulnificus (strain CMCP6).